Reading from the N-terminus, the 88-residue chain is Cell division topological specificity factor (88 aa).

It belongs to the MinE family.

Prevents the cell division inhibition by proteins MinC and MinD at internal division sites while permitting inhibition at polar sites. This ensures cell division at the proper site by restricting the formation of a division septum at the midpoint of the long axis of the cell. The sequence is that of Cell division topological specificity factor from Psychromonas ingrahamii (strain DSM 17664 / CCUG 51855 / 37).